The sequence spans 209 residues: MIRSIFKKNSSLPYFLKRSFITKPHSIITPIINNNNHNNNNINTPIKNIQSFNFKFFTTTTTSNPIHQQTTTTTTTTPSTEQQQLSKEAEEINENITKYNITLTDSCVKELNSVQKKSDSTDIFLRVMVDMGGCSGYQYIIKVENKLQDDDVLFIRNGAKVIIDKISLEMMEGSIIDYETALMRSSFVVASNPNTIKSCGCKISFELKK.

Residues 1–27 (MIRSIFKKNSSLPYFLKRSFITKPHSI) constitute a mitochondrion transit peptide. 3 residues coordinate Fe cation: C134, C199, and C201.

Belongs to the HesB/IscA family. The cofactor is Fe cation.

The protein resides in the mitochondrion. Functionally, involved in the maturation of mitochondrial 4Fe-4S proteins functioning late in the iron-sulfur cluster assembly pathway. May be involved in the binding of an intermediate of Fe/S cluster assembly. This Dictyostelium discoideum (Social amoeba) protein is Iron-sulfur cluster assembly 2 homolog, mitochondrial (isca2).